The chain runs to 332 residues: Long form salivary protein D7L2 (332 aa).

The N-terminal stretch at 1–21 is a signal peptide; sequence MFPPRKFLLSSFILAALHVTA. 2 disulfide bridges follow: Cys-40–Cys-77 and Cys-73–Cys-133. Trp-61 is a leukotriene E4 binding site. Residues Gly-157 and Lys-176 each contribute to the leukotriene E4 site. Intrachain disulfides connect Cys-184-Cys-219, Cys-200-Cys-331, and Cys-259-Cys-278. Noradrenaline contacts are provided by Glu-185, Arg-203, and His-216. 2 residues coordinate noradrenaline: Asp-294 and Glu-297.

The protein belongs to the PBP/GOBP family. In terms of assembly, interacts with human CD4. In terms of tissue distribution, saliva (at protein level). Female salivary gland (at protein level). Detected in the head and thorax of the female mosquitoes, where the salivary glands are located.

It localises to the secreted. In terms of biological role, modulates blood feeding of female mosquitoes on vertebrate species by binding and sequestering different mediators involved in the host response, such as biogenic amines and eicosanoids. Binds serotonin, histamine, tryptamine, noradrenaline, leukotriene B4, leukotriene C4, leukotriene D4, leukotriene E4 and U-46619, a stable analog of thromboxane A2. Does not bind adrenaline. Exhibits vasodilating activity. Inhibits agonist-induced platelet aggregation but not blood clotting. (Microbial infection) Probably promotes Plasmodium gallinaceum oocyst development in mosquito midgut. This chain is Long form salivary protein D7L2, found in Aedes aegypti (Yellowfever mosquito).